The chain runs to 434 residues: Enolase (434 aa).

A (2R)-2-phosphoglycerate-binding site is contributed by glutamine 166. Glutamate 208 functions as the Proton donor in the catalytic mechanism. Positions 245, 290, and 317 each coordinate Mg(2+). Residues lysine 342, arginine 371, serine 372, and lysine 393 each coordinate (2R)-2-phosphoglycerate. Catalysis depends on lysine 342, which acts as the Proton acceptor.

It belongs to the enolase family. The cofactor is Mg(2+).

The protein resides in the cytoplasm. The protein localises to the secreted. Its subcellular location is the cell surface. The enzyme catalyses (2R)-2-phosphoglycerate = phosphoenolpyruvate + H2O. Its pathway is carbohydrate degradation; glycolysis; pyruvate from D-glyceraldehyde 3-phosphate: step 4/5. Functionally, catalyzes the reversible conversion of 2-phosphoglycerate (2-PG) into phosphoenolpyruvate (PEP). It is essential for the degradation of carbohydrates via glycolysis. The protein is Enolase of Caldicellulosiruptor saccharolyticus (strain ATCC 43494 / DSM 8903 / Tp8T 6331).